A 399-amino-acid chain; its full sequence is Trimethyllysine dioxygenase (399 aa).

Fe cation is bound by residues His214, Asp216, and His360.

The protein belongs to the gamma-BBH/TMLD family. Fe(2+) is required as a cofactor. L-ascorbate serves as cofactor.

The protein localises to the cytoplasm. The enzyme catalyses N(6),N(6),N(6)-trimethyl-L-lysine + 2-oxoglutarate + O2 = (3S)-3-hydroxy-N(6),N(6),N(6)-trimethyl-L-lysine + succinate + CO2. It functions in the pathway amine and polyamine biosynthesis; carnitine biosynthesis. In terms of biological role, converts trimethyllysine (TML) into hydroxytrimethyllysine (HTML). The sequence is that of Trimethyllysine dioxygenase from Meyerozyma guilliermondii (strain ATCC 6260 / CBS 566 / DSM 6381 / JCM 1539 / NBRC 10279 / NRRL Y-324) (Yeast).